A 159-amino-acid polypeptide reads, in one-letter code: S-ribosylhomocysteine lyase (159 aa).

Histidine 53, histidine 57, and cysteine 124 together coordinate Fe cation.

This sequence belongs to the LuxS family. Homodimer. It depends on Fe cation as a cofactor.

The enzyme catalyses S-(5-deoxy-D-ribos-5-yl)-L-homocysteine = (S)-4,5-dihydroxypentane-2,3-dione + L-homocysteine. Its function is as follows. Involved in the synthesis of autoinducer 2 (AI-2) which is secreted by bacteria and is used to communicate both the cell density and the metabolic potential of the environment. The regulation of gene expression in response to changes in cell density is called quorum sensing. Catalyzes the transformation of S-ribosylhomocysteine (RHC) to homocysteine (HC) and 4,5-dihydroxy-2,3-pentadione (DPD). This is S-ribosylhomocysteine lyase from Porphyromonas gingivalis (strain ATCC 33277 / DSM 20709 / CIP 103683 / JCM 12257 / NCTC 11834 / 2561).